The following is a 334-amino-acid chain: Probable fructose-bisphosphate aldolase class 1 (334 aa).

The protein belongs to the class I fructose-bisphosphate aldolase family.

The enzyme catalyses beta-D-fructose 1,6-bisphosphate = D-glyceraldehyde 3-phosphate + dihydroxyacetone phosphate. Its pathway is carbohydrate degradation; glycolysis; D-glyceraldehyde 3-phosphate and glycerone phosphate from D-glucose: step 4/4. This chain is Probable fructose-bisphosphate aldolase class 1, found in Xanthomonas axonopodis pv. citri (strain 306).